An 872-amino-acid chain; its full sequence is Leucine--tRNA ligase (872 aa).

The 'HIGH' region signature appears at 42 to 52; that stretch reads PYPSGKLHMGH. Residues 632 to 636 carry the 'KMSKS' region motif; the sequence is KMSKS. Lys-635 is a binding site for ATP.

The protein belongs to the class-I aminoacyl-tRNA synthetase family.

It localises to the cytoplasm. It catalyses the reaction tRNA(Leu) + L-leucine + ATP = L-leucyl-tRNA(Leu) + AMP + diphosphate. The chain is Leucine--tRNA ligase from Chromobacterium violaceum (strain ATCC 12472 / DSM 30191 / JCM 1249 / CCUG 213 / NBRC 12614 / NCIMB 9131 / NCTC 9757 / MK).